The following is a 245-amino-acid chain: tRNA1(Val) (adenine(37)-N6)-methyltransferase (245 aa).

Belongs to the methyltransferase superfamily. tRNA (adenine-N(6)-)-methyltransferase family.

It localises to the cytoplasm. The catalysed reaction is adenosine(37) in tRNA1(Val) + S-adenosyl-L-methionine = N(6)-methyladenosine(37) in tRNA1(Val) + S-adenosyl-L-homocysteine + H(+). Functionally, specifically methylates the adenine in position 37 of tRNA(1)(Val) (anticodon cmo5UAC). The polypeptide is tRNA1(Val) (adenine(37)-N6)-methyltransferase (Citrobacter koseri (strain ATCC BAA-895 / CDC 4225-83 / SGSC4696)).